The chain runs to 338 residues: Anthranilate phosphoribosyltransferase (338 aa).

Residues Gly81, 84 to 85 (GD), Thr89, 91 to 94 (NIST), 109 to 117 (KHGNRNLSS), and Ala121 each bind 5-phospho-alpha-D-ribose 1-diphosphate. Gly81 is a binding site for anthranilate. Ser93 contributes to the Mg(2+) binding site. Asn112 lines the anthranilate pocket. Arg167 contributes to the anthranilate binding site. Asp226 and Glu227 together coordinate Mg(2+).

It belongs to the anthranilate phosphoribosyltransferase family. In terms of assembly, homodimer. Mg(2+) serves as cofactor.

It carries out the reaction N-(5-phospho-beta-D-ribosyl)anthranilate + diphosphate = 5-phospho-alpha-D-ribose 1-diphosphate + anthranilate. It participates in amino-acid biosynthesis; L-tryptophan biosynthesis; L-tryptophan from chorismate: step 2/5. Functionally, catalyzes the transfer of the phosphoribosyl group of 5-phosphorylribose-1-pyrophosphate (PRPP) to anthranilate to yield N-(5'-phosphoribosyl)-anthranilate (PRA). In Cereibacter sphaeroides (strain KD131 / KCTC 12085) (Rhodobacter sphaeroides), this protein is Anthranilate phosphoribosyltransferase.